A 304-amino-acid chain; its full sequence is tRNA pseudouridine synthase B (304 aa).

Catalysis depends on D38, which acts as the Nucleophile.

Belongs to the pseudouridine synthase TruB family. Type 1 subfamily.

It carries out the reaction uridine(55) in tRNA = pseudouridine(55) in tRNA. Responsible for synthesis of pseudouridine from uracil-55 in the psi GC loop of transfer RNAs. This is tRNA pseudouridine synthase B from Listeria welshimeri serovar 6b (strain ATCC 35897 / DSM 20650 / CCUG 15529 / CIP 8149 / NCTC 11857 / SLCC 5334 / V8).